The primary structure comprises 150 residues: MKCPFCNFSDSKVVDSRPDKGGAAIRRRRECESCGKRFTTHERVEEVLPLVTKRDGRREPFERMKLVNGIQKACEKRPVSVETIEKMVDRLETRLQESGEREIPTTTLGEWIMSELHGVDQVAYVRFASVYRSFKDINEFMEELQDLLKK.

The segment at 3–34 is a zinc-finger region; that stretch reads CPFCNFSDSKVVDSRPDKGGAAIRRRRECESC. The region spanning 49 to 139 is the ATP-cone domain; that stretch reads PLVTKRDGRR…VYRSFKDINE (91 aa).

It belongs to the NrdR family. The cofactor is Zn(2+).

Functionally, negatively regulates transcription of bacterial ribonucleotide reductase nrd genes and operons by binding to NrdR-boxes. The sequence is that of Transcriptional repressor NrdR from Citrifermentans bemidjiense (strain ATCC BAA-1014 / DSM 16622 / JCM 12645 / Bem) (Geobacter bemidjiensis).